The following is a 184-amino-acid chain: MFCLLHLCFYLANFASSIKRTHAVNGCCGLQMIALWAQSSGNADARVEEILAGEERRLAALLGSQGMRFWVCLAACRAMWGLAARRGRAEDSSSSPVDASKFPWRGGQHRTTMMPCLLRVGVFRPCHVRPTGDPSCDVQPPRLGFSRVPDTQVAFYGSGHWDPTPFSVHSCFFNFQVRKIIFLL.

An N-terminal signal peptide occupies residues 1–23 (MFCLLHLCFYLANFASSIKRTHA).

Its subcellular location is the secreted. This is an uncharacterized protein from Homo sapiens (Human).